The following is an 89-amino-acid chain: Small ribosomal subunit protein uS15 (89 aa).

The protein belongs to the universal ribosomal protein uS15 family. In terms of assembly, part of the 30S ribosomal subunit. Forms a bridge to the 50S subunit in the 70S ribosome, contacting the 23S rRNA.

One of the primary rRNA binding proteins, it binds directly to 16S rRNA where it helps nucleate assembly of the platform of the 30S subunit by binding and bridging several RNA helices of the 16S rRNA. In terms of biological role, forms an intersubunit bridge (bridge B4) with the 23S rRNA of the 50S subunit in the ribosome. The polypeptide is Small ribosomal subunit protein uS15 (Corynebacterium aurimucosum (strain ATCC 700975 / DSM 44827 / CIP 107346 / CN-1) (Corynebacterium nigricans)).